The following is a 214-amino-acid chain: STS14 protein (214 aa).

The N-terminal stretch at 1-19 (MFVLSTAMACLVYIYIYIY) is a signal peptide. Tandem repeats lie at residues 13 to 14 (YI), 15 to 16 (YI), and 17 to 18 (YI). The tract at residues 13-18 (YIYIYI) is 3 X 2 AA tandem repeats of Y-I. The region spanning 80–200 (LDAHNKARSE…YEGPATLTVC (121 aa)) is the SCP domain.

Belongs to the CRISP family. In terms of tissue distribution, highly expressed in the stigma and stylar cortex throughout pistil development. Not expressed in other organs.

May protect the outer tissues of the pistil from pathogen attack. This Solanum tuberosum (Potato) protein is STS14 protein (STS14).